Consider the following 386-residue polypeptide: Heat-inducible transcription repressor HrcA (386 aa).

Belongs to the HrcA family.

Its function is as follows. Negative regulator of class I heat shock genes (grpE-dnaK-dnaJ and groELS operons). Prevents heat-shock induction of these operons. In Chlamydia abortus (strain DSM 27085 / S26/3) (Chlamydophila abortus), this protein is Heat-inducible transcription repressor HrcA.